We begin with the raw amino-acid sequence, 61 residues long: Protein CopA/IncA (61 aa).

Controls the copy number in gene replication. This chain is Protein CopA/IncA (copA), found in Escherichia coli.